The chain runs to 392 residues: CCA-adding enzyme (392 aa).

2 residues coordinate ATP: S45 and K48. 2 residues coordinate CTP: S45 and K48. Positions 55, 57, and 106 each coordinate Mg(2+). ATP contacts are provided by H129, K148, and Y157. The CTP site is built by H129, K148, and Y157.

Belongs to the tRNA nucleotidyltransferase/poly(A) polymerase family. Archaeal CCA-adding enzyme subfamily. In terms of assembly, homodimer. Mg(2+) is required as a cofactor.

The enzyme catalyses a tRNA precursor + 2 CTP + ATP = a tRNA with a 3' CCA end + 3 diphosphate. It carries out the reaction a tRNA with a 3' CCA end + 2 CTP + ATP = a tRNA with a 3' CCACCA end + 3 diphosphate. In terms of biological role, catalyzes the addition and repair of the essential 3'-terminal CCA sequence in tRNAs without using a nucleic acid template. Adds these three nucleotides in the order of C, C, and A to the tRNA nucleotide-73, using CTP and ATP as substrates and producing inorganic pyrophosphate. tRNA 3'-terminal CCA addition is required both for tRNA processing and repair. Also involved in tRNA surveillance by mediating tandem CCA addition to generate a CCACCA at the 3' terminus of unstable tRNAs. While stable tRNAs receive only 3'-terminal CCA, unstable tRNAs are marked with CCACCA and rapidly degraded. In Nanoarchaeum equitans (strain Kin4-M), this protein is CCA-adding enzyme.